The sequence spans 143 residues: Large ribosomal subunit protein uL16c (143 aa).

Belongs to the universal ribosomal protein uL16 family. Part of the 50S ribosomal subunit.

It is found in the plastid. The protein localises to the chloroplast. The protein is Large ribosomal subunit protein uL16c of Spirogyra maxima (Green alga).